Here is a 293-residue protein sequence, read N- to C-terminus: Probable endonuclease 4 (293 aa).

His78, His118, Glu154, Asp188, His191, His225, Asp238, His240, and Glu270 together coordinate Zn(2+).

Belongs to the AP endonuclease 2 family. The cofactor is Zn(2+).

It catalyses the reaction Endonucleolytic cleavage to 5'-phosphooligonucleotide end-products.. Endonuclease IV plays a role in DNA repair. It cleaves phosphodiester bonds at apurinic or apyrimidinic (AP) sites, generating a 3'-hydroxyl group and a 5'-terminal sugar phosphate. The chain is Probable endonuclease 4 from Vibrio vulnificus (strain YJ016).